Reading from the N-terminus, the 479-residue chain is Aspartyl/glutamyl-tRNA(Asn/Gln) amidotransferase subunit B (479 aa).

Belongs to the GatB/GatE family. GatB subfamily. As to quaternary structure, heterotrimer of A, B and C subunits.

The enzyme catalyses L-glutamyl-tRNA(Gln) + L-glutamine + ATP + H2O = L-glutaminyl-tRNA(Gln) + L-glutamate + ADP + phosphate + H(+). It catalyses the reaction L-aspartyl-tRNA(Asn) + L-glutamine + ATP + H2O = L-asparaginyl-tRNA(Asn) + L-glutamate + ADP + phosphate + 2 H(+). Its function is as follows. Allows the formation of correctly charged Asn-tRNA(Asn) or Gln-tRNA(Gln) through the transamidation of misacylated Asp-tRNA(Asn) or Glu-tRNA(Gln) in organisms which lack either or both of asparaginyl-tRNA or glutaminyl-tRNA synthetases. The reaction takes place in the presence of glutamine and ATP through an activated phospho-Asp-tRNA(Asn) or phospho-Glu-tRNA(Gln). The chain is Aspartyl/glutamyl-tRNA(Asn/Gln) amidotransferase subunit B from Halorhodospira halophila (strain DSM 244 / SL1) (Ectothiorhodospira halophila (strain DSM 244 / SL1)).